Here is a 619-residue protein sequence, read N- to C-terminus: Nucleolar GTP-binding protein 2 (619 aa).

The span at 1-10 (MGTGKKEKSR) shows a compositional bias: basic and acidic residues. The tract at residues 1–24 (MGTGKKEKSRIQRQGKVTGDPKVK) is disordered. The CP-type G domain maps to 222-383 (WNELYKVIDS…LIDCPGIVPP (162 aa)). Residues 332-339 (GYPNVGKS) and 376-380 (DCPGI) each bind GTP. The interval 473–619 (PWFTPAPEKE…PPKKQRRSRK (147 aa)) is disordered. Positions 489 to 500 (MEGREGRYGEMS) are enriched in basic and acidic residues. The span at 536–546 (SDSDSEVEEAA) shows a compositional bias: acidic residues. The span at 547–556 (EEKGEEKSTA) shows a compositional bias: basic and acidic residues. Positions 565–603 (SSDEEEDGEEEGSDVEDDEEGSDLDIEGASELEESESEA) are enriched in acidic residues.

It belongs to the TRAFAC class YlqF/YawG GTPase family. NOG2 subfamily.

The protein localises to the nucleus. The protein resides in the nucleolus. GTPase that associates with pre-60S ribosomal subunits in the nucleolus and is required for their nuclear export and maturation. The sequence is that of Nucleolar GTP-binding protein 2 (nog-2) from Neurospora crassa (strain ATCC 24698 / 74-OR23-1A / CBS 708.71 / DSM 1257 / FGSC 987).